The chain runs to 229 residues: 3,4-dihydroxy-2-butanone 4-phosphate synthase (229 aa).

D-ribulose 5-phosphate is bound by residues Arg-28 to Glu-29, Asp-33, Arg-164 to Thr-168, and Glu-188. A Mg(2+)-binding site is contributed by Glu-29. Residue His-167 coordinates Mg(2+).

Belongs to the DHBP synthase family. Homodimer. Mg(2+) serves as cofactor. It depends on Mn(2+) as a cofactor.

The catalysed reaction is D-ribulose 5-phosphate = (2S)-2-hydroxy-3-oxobutyl phosphate + formate + H(+). The protein operates within cofactor biosynthesis; riboflavin biosynthesis; 2-hydroxy-3-oxobutyl phosphate from D-ribulose 5-phosphate: step 1/1. Functionally, catalyzes the conversion of D-ribulose 5-phosphate to formate and 3,4-dihydroxy-2-butanone 4-phosphate. This is 3,4-dihydroxy-2-butanone 4-phosphate synthase from Methanothermobacter thermautotrophicus (strain ATCC 29096 / DSM 1053 / JCM 10044 / NBRC 100330 / Delta H) (Methanobacterium thermoautotrophicum).